A 2276-amino-acid chain; its full sequence is Poly [ADP-ribose] polymerase tankyrase (2276 aa).

2 stretches are compositionally biased toward basic residues: residues 1 to 15 (MARR…VKAA) and 87 to 98 (KAVKAPKVKAPS). Disordered regions lie at residues 1–20 (MARR…KIDG) and 79–103 (SSKT…KGND). ANK repeat units lie at residues 345–374 (KNIT…TINI), 378–407 (DNWY…SVTM), 411–440 (QTET…DLEK), 461–490 (SGNS…IVVD), 498–527 (NRLT…LVEG), 531–560 (KKRT…SLTL), 564–593 (SGNT…NILS), 598–627 (WQLY…KDKA), 675–725 (SGQT…KVDV), 729–758 (EDNT…NKRN), 970–999 (KDDV…EMHL), 1171–1200 (NGNT…HVDL), 1204–1233 (DGNT…DVTE), 1472–1501 (GLIP…SLKT), and 1505–1535 (YGRT…AVVL). Positions 1570-1649 (VPARVESDEE…STGPKRKKLV (80 aa)) are disordered. Acidic residues-rich tracts occupy residues 1576–1590 (SDEE…ESGE) and 1612–1622 (SDDEDDDDDDS). One copy of the ANK 16 repeat lies at 1662 to 1706 (KENNPLHYFIEPLAWENVELLGDLAAANKTAIVQCLIDKRSPNPI). The WGR domain maps to 1788–1889 (GLVSFCDETQ…ANFRDMPKKY (102 aa)). Residues 1910–2045 (KNTEKDPIRR…EIETATRLLC (136 aa)) enclose the PARP alpha-helical domain. One can recognise a PARP catalytic domain in the interval 2047–2276 (AEFRQDLDRV…VLPKYIVMYK (230 aa)).

In terms of tissue distribution, expressed throughout the head and tail, in germ cells and somatic cells.

Its subcellular location is the nucleus. The protein resides in the chromosome. The enzyme catalyses NAD(+) + (ADP-D-ribosyl)n-acceptor = nicotinamide + (ADP-D-ribosyl)n+1-acceptor + H(+).. The catalysed reaction is L-aspartyl-[protein] + NAD(+) = 4-O-(ADP-D-ribosyl)-L-aspartyl-[protein] + nicotinamide. It catalyses the reaction L-glutamyl-[protein] + NAD(+) = 5-O-(ADP-D-ribosyl)-L-glutamyl-[protein] + nicotinamide. Its function is as follows. Poly[ADP-ribose] polymerases modify various nuclear proteins by poly(ADP-ribosyl)ation, a post-translational modification synthesized after DNA damage that appears as an obligatory step in a detection/signaling pathway leading to the reparation of DNA strand breaks and programmed cell death. The protein is Poly [ADP-ribose] polymerase tankyrase of Caenorhabditis elegans.